We begin with the raw amino-acid sequence, 255 residues long: Small ribosomal subunit protein eS1 (255 aa).

The span at 1 to 18 (MAVGKNKRLSKGKKGLKK) shows a compositional bias: basic residues. The interval 1 to 28 (MAVGKNKRLSKGKKGLKKRTQDPFSRKD) is disordered. Ala2 is subject to N-acetylalanine; partial. A compositionally biased stretch (basic and acidic residues) spans 19–28 (RTQDPFSRKD).

Belongs to the eukaryotic ribosomal protein eS1 family. In terms of assembly, component of the small ribosomal subunit. Mature ribosomes consist of a small (40S) and a large (60S) subunit. The 40S subunit contains about 33 different proteins and 1 molecule of RNA (18S). The 60S subunit contains about 49 different proteins and 3 molecules of RNA (25S, 5.8S and 5S).

It localises to the cytoplasm. The polypeptide is Small ribosomal subunit protein eS1 (Ajellomyces capsulatus (strain NAm1 / WU24) (Darling's disease fungus)).